The following is a 1012-amino-acid chain: Isoleucine--tRNA ligase, mitochondrial (1012 aa).

A mitochondrion-targeting transit peptide spans 1–48 (MHWGLCPRGPGAAAVAAAGSFWGPARLPSRLGCLGMTRRLVVRSVAGA). N6-succinyllysine is present on Lys56. The residue at position 74 (Lys74) is an N6-acetyllysine; alternate. Lys74 bears the N6-succinyllysine; alternate mark. The short motif at 116–126 (PYANGDPHVGH) is the 'HIGH' region element. Position 194 is an N6-succinyllysine (Lys194). At Lys233 the chain carries N6-acetyllysine. Lys241 is subject to N6-acetyllysine; alternate. Lys241 carries the N6-succinyllysine; alternate modification. N6-succinyllysine occurs at positions 479 and 500. Residues Lys664 and Lys667 each coordinate ATP. A 'KMSKS' region motif is present at residues 664–668 (KMSKS). N6-acetyllysine is present on Lys725. Residues Lys775 and Lys781 each carry the N6-acetyllysine; alternate modification. Lys775 and Lys781 each carry N6-succinyllysine; alternate.

It belongs to the class-I aminoacyl-tRNA synthetase family.

It is found in the mitochondrion matrix. The catalysed reaction is tRNA(Ile) + L-isoleucine + ATP = L-isoleucyl-tRNA(Ile) + AMP + diphosphate. Its function is as follows. Aminoacyl-tRNA synthetase that catalyzes the specific attachment of isoleucine to its cognate tRNA (tRNA(Ile)). This Mus musculus (Mouse) protein is Isoleucine--tRNA ligase, mitochondrial.